The following is a 418-amino-acid chain: Putative ion-transport protein YfeO (418 aa).

10 helical membrane-spanning segments follow: residues 15 to 37 (PAVAIGIASSLILIVVMKIASVL), 57 to 79 (LWIIGVLTLTGIAVGLVIRFSQG), 99 to 118 (ALPRLIVALILGLAGGVSLG), 149 to 171 (ILASAGTIGALFGTPVAAALIFS), 186 to 208 (LFAPLMAAAAGALTTGLFFHPHF), 221 to 243 (TDILSGAIVAAIAIAAGMVAVWC), 258 to 280 (VLVLGIGGFILGILGVIGGPVSL), 301 to 323 (YFLLAVIKLAALVVAAASGFRGG), 343 to 363 (VPAVPAAITVSCAILGIVLVV), and 376 to 398 (VVVPNTTLLPLLCIVMLPAWLLL).

This sequence belongs to the chloride channel (TC 2.A.49) family.

The protein resides in the cell membrane. The sequence is that of Putative ion-transport protein YfeO (yfeO) from Shigella flexneri.